Reading from the N-terminus, the 407-residue chain is Imidazolonepropionase (407 aa).

Fe(3+) is bound by residues histidine 68 and histidine 70. Residues histidine 68 and histidine 70 each contribute to the Zn(2+) site. Residues arginine 77, tyrosine 140, and histidine 173 each coordinate 4-imidazolone-5-propanoate. Tyrosine 140 is an N-formimidoyl-L-glutamate binding site. Histidine 238 provides a ligand contact to Fe(3+). Position 238 (histidine 238) interacts with Zn(2+). 4-imidazolone-5-propanoate is bound at residue glutamine 241. Aspartate 313 provides a ligand contact to Fe(3+). Zn(2+) is bound at residue aspartate 313. Asparagine 315 and glycine 317 together coordinate N-formimidoyl-L-glutamate. Threonine 318 is a binding site for 4-imidazolone-5-propanoate.

This sequence belongs to the metallo-dependent hydrolases superfamily. HutI family. Zn(2+) is required as a cofactor. Requires Fe(3+) as cofactor.

The protein resides in the cytoplasm. The catalysed reaction is 4-imidazolone-5-propanoate + H2O = N-formimidoyl-L-glutamate. It participates in amino-acid degradation; L-histidine degradation into L-glutamate; N-formimidoyl-L-glutamate from L-histidine: step 3/3. Catalyzes the hydrolytic cleavage of the carbon-nitrogen bond in imidazolone-5-propanoate to yield N-formimidoyl-L-glutamate. It is the third step in the universal histidine degradation pathway. This Burkholderia cenocepacia (strain HI2424) protein is Imidazolonepropionase.